Here is a 485-residue protein sequence, read N- to C-terminus: Velvet complex subunit B (485 aa).

The region spanning 33–459 is the Velvet domain; that stretch reads GRKHYSLEVV…GNQGQKLPLA (427 aa). The segment at 107–353 is disordered; it reads VLHPSSVDRH…PPPPRHTYTR (247 aa). 4 stretches are compositionally biased toward polar residues: residues 134–155, 234–243, 267–304, and 326–341; these read APQS…TLSQ, RSPSSSTSDH, SISS…SPHS, and THSQ…QHVS.

Belongs to the velvet family. VelB subfamily. As to quaternary structure, component of the heterotrimeric velvet complex composed of laeA, veA and velB; VeA acting as a bridging protein between laeA and velB. Forms a heterodimeric complex with vosA; the formation of the velB-vosA complex is light-dependent.

The protein resides in the nucleus. Its subcellular location is the cytoplasm. Functionally, component of the velvet transcription factor complex that controls sexual/asexual developmental ratio in response to light, promoting sexual development in the darkness while stimulating asexual sporulation under illumination. The velvet complex acts as a global regulator for secondary metabolite gene expression. Component of the velB-VosA heterodimeric complex that plays a dual role in activating genes associated with spore maturation and repressing certain development-associated genes. The velB-VosA complex binds DNA through the DNA-binding domain of vosA that recognizes an 11-nucleotide consensus sequence 5'-CTGGCCGCGGC-3' consisting of two motifs in the promoters of key developmental regulatory genes. This is Velvet complex subunit B from Laccaria bicolor (strain S238N-H82 / ATCC MYA-4686) (Bicoloured deceiver).